Reading from the N-terminus, the 74-residue chain is Sec-independent protein translocase protein TatA (74 aa).

Residues 1–21 (MGGISIWNLVIIVLLVVLLFG) traverse the membrane as a helical segment. Residues 51–74 (AEFEKVEQKTAESTEQKAKEKEQA) are disordered.

It belongs to the TatA/E family. As to quaternary structure, the Tat system comprises two distinct complexes: a TatABC complex, containing multiple copies of TatA, TatB and TatC subunits, and a separate TatA complex, containing only TatA subunits. Substrates initially bind to the TatABC complex, which probably triggers association of the separate TatA complex to form the active translocon.

It is found in the cell inner membrane. Its function is as follows. Part of the twin-arginine translocation (Tat) system that transports large folded proteins containing a characteristic twin-arginine motif in their signal peptide across membranes. TatA could form the protein-conducting channel of the Tat system. This chain is Sec-independent protein translocase protein TatA, found in Glaesserella parasuis serovar 5 (strain SH0165) (Haemophilus parasuis).